The following is an 824-amino-acid chain: E3 ubiquitin-protein ligase TRIM71 (824 aa).

An RING-type zinc finger spans residues Cys-23–Asp-93. The disordered stretch occupies residues Ser-37–Ser-56. The B box-type 1; atypical zinc-finger motif lies at Leu-147–Leu-194. 8 residues coordinate Zn(2+): Cys-152, Cys-155, Cys-176, His-180, Cys-234, His-237, Cys-257, and His-262. A B box-type 2 zinc finger spans residues Glu-229–Leu-270. Positions Gln-293–Lys-321 form a coiled coil. The Filamin repeat unit spans residues Ser-435–Val-536. NHL repeat units follow at residues Met-549–Cys-592, His-596–Asp-639, Leu-643–Asp-686, Leu-690–Asp-733, Ala-737–Asn-780, and Leu-784–Phe-824.

The protein belongs to the TRIM/RBCC family.

The protein resides in the cytoplasm. The protein localises to the P-body. The enzyme catalyses S-ubiquitinyl-[E2 ubiquitin-conjugating enzyme]-L-cysteine + [acceptor protein]-L-lysine = [E2 ubiquitin-conjugating enzyme]-L-cysteine + N(6)-ubiquitinyl-[acceptor protein]-L-lysine.. It participates in protein modification; protein ubiquitination. E3 ubiquitin-protein ligase that cooperates with the microRNAs (miRNAs) machinery and promotes embryonic stem cells proliferation and maintenance. Binds to miRNAs and participates in post-transcriptional repression of transcripts. Required to maintain proliferation and prevent premature differentiation of neural progenitor cells during early neural development. This Danio rerio (Zebrafish) protein is E3 ubiquitin-protein ligase TRIM71 (trim71).